We begin with the raw amino-acid sequence, 323 residues long: Cytosolic sulfotransferase 5 (323 aa).

3'-phosphoadenylyl sulfate is bound at residue 69–74; it reads KCGTTW. H135 acts as the Proton acceptor in catalysis. Residues R157, S165, and 289 to 291 contribute to the 3'-phosphoadenylyl sulfate site; that span reads RKG.

The protein belongs to the sulfotransferase 1 family. Expressed in inflorescence stems, roots and siliques.

The protein resides in the cytoplasm. Its function is as follows. Sulfotransferase that utilizes 3'-phospho-5'-adenylyl sulfate (PAPS) as sulfonate donor to specifically catalyze the sulfate conjugation of flavones and flavonols. Strictly specific for the position 7. Substrate preference is kaempferol 3-sulfate &gt; isorhamnetin &gt; kaempferol. This is Cytosolic sulfotransferase 5 (SOT5) from Arabidopsis thaliana (Mouse-ear cress).